The following is a 395-amino-acid chain: Cystathionine beta-lyase MetC (395 aa).

The residue at position 210 (Lys210) is an N6-(pyridoxal phosphate)lysine.

Belongs to the trans-sulfuration enzymes family. Homotetramer; dimer of dimers. Pyridoxal 5'-phosphate is required as a cofactor.

Its subcellular location is the cytoplasm. The catalysed reaction is L,L-cystathionine + H2O = L-homocysteine + pyruvate + NH4(+). The enzyme catalyses L-cysteine + H2O = hydrogen sulfide + pyruvate + NH4(+) + H(+). It carries out the reaction an S-substituted L-cysteine + H2O = a thiol + pyruvate + NH4(+). It participates in amino-acid biosynthesis; L-methionine biosynthesis via de novo pathway; L-homocysteine from L-cystathionine: step 1/1. Its activity is regulated as follows. L-cysteine inhibits cystathionine beta-lyase activity competitively. Inhibited by aminoethoxyvinylglycine (AVG). In terms of biological role, primarily catalyzes the cleavage of cystathionine to homocysteine, pyruvate and ammonia during methionine biosynthesis. Also exhibits cysteine desulfhydrase activity, producing sulfide from cysteine. In addition, under certain growth conditions, exhibits significant alanine racemase coactivity. This chain is Cystathionine beta-lyase MetC, found in Escherichia coli (strain K12).